Consider the following 289-residue polypeptide: dTDP-rhamnosyl transferase RfbG (289 aa).

Belongs to the glycosyltransferase 2 family.

It functions in the pathway bacterial outer membrane biogenesis; lipopolysaccharide biosynthesis. The polypeptide is dTDP-rhamnosyl transferase RfbG (rfbG) (Shigella flexneri).